Consider the following 257-residue polypeptide: Glutamate racemase (257 aa).

Residues 12 to 13 and 44 to 45 contribute to the substrate site; these read DS and YG. C75 functions as the Proton donor/acceptor in the catalytic mechanism. 76-77 contributes to the substrate binding site; it reads NT. C186 functions as the Proton donor/acceptor in the catalytic mechanism. 187-188 provides a ligand contact to substrate; sequence TH.

It belongs to the aspartate/glutamate racemases family.

The enzyme catalyses L-glutamate = D-glutamate. Its pathway is cell wall biogenesis; peptidoglycan biosynthesis. Functionally, provides the (R)-glutamate required for cell wall biosynthesis. The protein is Glutamate racemase of Clostridium kluyveri (strain NBRC 12016).